A 165-amino-acid chain; its full sequence is MNSLENLILVGVIKSCHGIKGHVMLKSFTDPATKILERNLVNESGANIYIKLISQNAKGELICTFNDIATRNEAEHLKGYKIFCLRASLPELEEDEFYIADLTHLPVLNQDHKEIGKIKNILNFGAGDIIEIEFSDQTTELLPFNKEFFPIITKDYVILNYQREA.

One can recognise a PRC barrel domain in the interval 94-165 (EDEFYIADLT…YVILNYQREA (72 aa)).

This sequence belongs to the RimM family. Binds ribosomal protein uS19.

It localises to the cytoplasm. Functionally, an accessory protein needed during the final step in the assembly of 30S ribosomal subunit, possibly for assembly of the head region. Essential for efficient processing of 16S rRNA. May be needed both before and after RbfA during the maturation of 16S rRNA. It has affinity for free ribosomal 30S subunits but not for 70S ribosomes. The sequence is that of Ribosome maturation factor RimM from Rickettsia rickettsii (strain Iowa).